A 368-amino-acid polypeptide reads, in one-letter code: 3-dehydroquinate synthase (368 aa).

NAD(+) contacts are provided by residues 71–76 (DGEAAK), 105–109 (GATTD), 129–130 (TT), Lys142, and Lys151. The Zn(2+) site is built by Glu184, His247, and His263.

The protein belongs to the sugar phosphate cyclases superfamily. Dehydroquinate synthase family. Requires Co(2+) as cofactor. It depends on Zn(2+) as a cofactor. NAD(+) serves as cofactor.

It localises to the cytoplasm. The catalysed reaction is 7-phospho-2-dehydro-3-deoxy-D-arabino-heptonate = 3-dehydroquinate + phosphate. Its pathway is metabolic intermediate biosynthesis; chorismate biosynthesis; chorismate from D-erythrose 4-phosphate and phosphoenolpyruvate: step 2/7. Its function is as follows. Catalyzes the conversion of 3-deoxy-D-arabino-heptulosonate 7-phosphate (DAHP) to dehydroquinate (DHQ). The protein is 3-dehydroquinate synthase of Thermobifida fusca (strain YX).